Here is a 466-residue protein sequence, read N- to C-terminus: MVLDDLGSSLRGTLDKLQGKTTLSEDDVEEIVKEIQRSLLSADVDVDLVMDLSDSIRERALDEEPPAGTTARDHVLKIVYEEMVELVGESTALPLEEQTIVLAGLQGSGKTTTAAKMAWWFSKKGLRPAVIQTDTFRPGAYDQAKEMCERAEVDFYGNPDSDDPVEIAERGLEETADADVHIVDTAGRHALEEALIDELEAIESAVDPDRNLLVLDAAIGQGAKDQAERFHDAVGIDGVAITKLDGTAKGGGALAAVDQTDSSIAFLGTGEEVKDIERFEPSGFISRLLGMGDLKQLSERVERAMEETQAEEDWDPEDLMKGEFTLKDMRNQMNAMNKMGPLDQVMDMIPGLGGGIKDQLPDDAMDMTQERLRDFEVIMDSMSEAELENPRAIGQSQIERIARGSGTDEDTVRELLEQHKMMSRMMKQFQGMGDGDMQRMMKQMQQGGGGGGGGGGGLGGMGPFGD.

Residues 104–111 (GLQGSGKT), 184–188 (DTAGR), and 242–245 (TKLD) each bind GTP. The disordered stretch occupies residues 444 to 466 (MQQGGGGGGGGGGGLGGMGPFGD). Gly residues predominate over residues 446-466 (QGGGGGGGGGGGLGGMGPFGD).

It belongs to the GTP-binding SRP family. SRP54 subfamily. As to quaternary structure, part of the signal recognition particle protein translocation system, which is composed of SRP and FtsY. Archaeal SRP consists of a 7S RNA molecule of 300 nucleotides and two protein subunits: SRP54 and SRP19.

It is found in the cytoplasm. The catalysed reaction is GTP + H2O = GDP + phosphate + H(+). Involved in targeting and insertion of nascent membrane proteins into the cytoplasmic membrane. Binds to the hydrophobic signal sequence of the ribosome-nascent chain (RNC) as it emerges from the ribosomes. The SRP-RNC complex is then targeted to the cytoplasmic membrane where it interacts with the SRP receptor FtsY. The protein is Signal recognition particle 54 kDa protein of Natronomonas pharaonis (strain ATCC 35678 / DSM 2160 / CIP 103997 / JCM 8858 / NBRC 14720 / NCIMB 2260 / Gabara) (Halobacterium pharaonis).